A 166-amino-acid chain; its full sequence is Cofilin-2 (166 aa).

At Ala-2 the chain carries N-acetylalanine. Position 3 is a phosphoserine (Ser-3). One can recognise an ADF-H domain in the interval 4 to 153; that stretch reads GVTVNDEVIK…KDRSTLGEKL (150 aa). Thr-6 carries the phosphothreonine modification. The Nuclear localization signal signature appears at 30–34; sequence KKRKK.

This sequence belongs to the actin-binding proteins ADF family. Interacts with CSRP3; possibly two molecules of CFL2 can interact with one molecule if CSRP3. In terms of processing, the phosphorylation of Ser-24 may prevent recognition of the nuclear localization signal. As to expression, predominantly expressed in skeletal muscle.

The protein localises to the nucleus matrix. It localises to the cytoplasm. It is found in the cytoskeleton. Its function is as follows. Controls reversibly actin polymerization and depolymerization in a pH-sensitive manner. It has the ability to bind G- and F-actin in a 1:1 ratio of cofilin to actin. It is the major component of intranuclear and cytoplasmic actin rods. Required for muscle maintenance. May play a role during the exchange of alpha-actin forms during the early postnatal remodeling of the sarcomere. The chain is Cofilin-2 (Cfl2) from Mus musculus (Mouse).